Consider the following 322-residue polypeptide: Sideroflexin-1 (322 aa).

Ser-2 carries the post-translational modification N-acetylserine. Residues 2 to 102 are Mitochondrial matrix-facing; that stretch reads SGELPPNINI…MSAQVPMNMT (101 aa). A helical membrane pass occupies residues 103–120; sequence ITGCMMTFYRTTPAVLFW. The Mitochondrial intermembrane segment spans residues 121–146; it reads QWINQSFNAVVNYTNRSGDAPLTVNE. Residues 147–167 form a helical membrane-spanning segment; sequence LGTAYVSATTGAVATALGLNA. At 168–174 the chain is on the mitochondrial matrix side; sequence LTKHVSP. The helical transmembrane segment at 175-195 threads the bilayer; sequence LIGRFVPFAAVAAANCINIPL. Over 196–228 the chain is Mitochondrial intermembrane; it reads MRQRELKVGIPVTDENGNRLGESANAAKQAITQ. Residues 229–249 form a helical membrane-spanning segment; it reads VVVSRILMAAPGMAIPPFIMN. The Mitochondrial matrix segment spans residues 250–266; it reads TLEKKAFLKRFPWMSAP. Residues 267–287 form a helical membrane-spanning segment; it reads VQVGIVGFCLVFATPLCCALF. Over 288–322 the chain is Mitochondrial intermembrane; the sequence is PQKSSMSVTSLEAELQARIRETYPELRRVYFNKGL.

It belongs to the sideroflexin family.

It localises to the mitochondrion inner membrane. It catalyses the reaction L-serine(in) = L-serine(out). The catalysed reaction is L-alanine(in) = L-alanine(out). The enzyme catalyses L-cysteine(in) = L-cysteine(out). Its function is as follows. Amino acid transporter importing serine, an essential substrate of the mitochondrial branch of the one-carbon pathway, into mitochondria. Mitochondrial serine is then converted to glycine and formate, which exits to the cytosol where it is used to generate the charged folates that serve as one-carbon donors. May also transport other amino acids including alanine and cysteine. This chain is Sideroflexin-1 (SFXN1), found in Bos taurus (Bovine).